A 427-amino-acid chain; its full sequence is Glutamate-1-semialdehyde 2,1-aminomutase (427 aa).

Lys265 is subject to N6-(pyridoxal phosphate)lysine.

It belongs to the class-III pyridoxal-phosphate-dependent aminotransferase family. HemL subfamily. As to quaternary structure, homodimer. Requires pyridoxal 5'-phosphate as cofactor.

It localises to the cytoplasm. The catalysed reaction is (S)-4-amino-5-oxopentanoate = 5-aminolevulinate. It functions in the pathway porphyrin-containing compound metabolism; protoporphyrin-IX biosynthesis; 5-aminolevulinate from L-glutamyl-tRNA(Glu): step 2/2. The protein is Glutamate-1-semialdehyde 2,1-aminomutase of Burkholderia vietnamiensis (strain G4 / LMG 22486) (Burkholderia cepacia (strain R1808)).